The following is a 293-amino-acid chain: Ribosomal protein L11 methyltransferase (293 aa).

Residues Thr-145, Gly-166, Asp-188, and Asn-230 each contribute to the S-adenosyl-L-methionine site.

It belongs to the methyltransferase superfamily. PrmA family.

The protein localises to the cytoplasm. It carries out the reaction L-lysyl-[protein] + 3 S-adenosyl-L-methionine = N(6),N(6),N(6)-trimethyl-L-lysyl-[protein] + 3 S-adenosyl-L-homocysteine + 3 H(+). Functionally, methylates ribosomal protein L11. This is Ribosomal protein L11 methyltransferase from Shewanella baltica (strain OS223).